Consider the following 120-residue polypeptide: U13-lycotoxin-Ls1a (120 aa).

Residues 1 to 16 (MKILFVLISILYAVYC) form the signal peptide. The propeptide occupies 17–54 (FSSEEDVDSAYLANELEPVEDINSEQYAALEPKEEQGR). 4 disulfides stabilise this stretch: cysteine 56-cysteine 70, cysteine 63-cysteine 76, cysteine 69-cysteine 87, and cysteine 78-cysteine 85. Positions 56-95 (CADMGQDCKDDCDCCLNIATCNCWFGRYFCSCTFGDYQTC) constitute an Agouti domain.

This sequence belongs to the neurotoxin 05 (agouti) family. In terms of processing, contains 6 disulfide bonds. As to expression, expressed by the venom gland.

It is found in the secreted. The polypeptide is U13-lycotoxin-Ls1a (Lycosa singoriensis (Wolf spider)).